A 337-amino-acid polypeptide reads, in one-letter code: D-alanine--D-alanine ligase (337 aa).

The ATP-grasp domain occupies 126 to 326; the sequence is KQIWISNGLS…YADLVLWLLS (201 aa). Residue 152 to 207 coordinates ATP; the sequence is VKHLGLPLIVKPAHEGSSLGLTKVKSVEELPAAYQLAAGLDKKVIAETCIVGDELT. Positions 279, 293, and 295 each coordinate Mg(2+).

The protein belongs to the D-alanine--D-alanine ligase family. The cofactor is Mg(2+). Requires Mn(2+) as cofactor.

It localises to the cytoplasm. The catalysed reaction is 2 D-alanine + ATP = D-alanyl-D-alanine + ADP + phosphate + H(+). It functions in the pathway cell wall biogenesis; peptidoglycan biosynthesis. Functionally, cell wall formation. This Polynucleobacter asymbioticus (strain DSM 18221 / CIP 109841 / QLW-P1DMWA-1) (Polynucleobacter necessarius subsp. asymbioticus) protein is D-alanine--D-alanine ligase.